Reading from the N-terminus, the 763-residue chain is Phosphoglycerol transferase I (763 aa).

Transmembrane regions (helical) follow at residues 1-21, 26-46, 77-97, and 108-128; these read MSEL…AWKA, WWFA…ITLF, ILPG…LGWI, and FGYS…SPAF.

Belongs to the OpgB family.

It is found in the cell inner membrane. The enzyme catalyses a phosphatidylglycerol + a membrane-derived-oligosaccharide D-glucose = a 1,2-diacyl-sn-glycerol + a membrane-derived-oligosaccharide 6-(glycerophospho)-D-glucose.. Its pathway is glycan metabolism; osmoregulated periplasmic glucan (OPG) biosynthesis. Transfers a phosphoglycerol residue from phosphatidylglycerol to the membrane-bound nascent glucan backbones. In Escherichia coli (strain UTI89 / UPEC), this protein is Phosphoglycerol transferase I.